Consider the following 346-residue polypeptide: N-acetyl-gamma-glutamyl-phosphate reductase (346 aa).

Cysteine 150 is an active-site residue.

Belongs to the NAGSA dehydrogenase family. Type 1 subfamily.

It is found in the cytoplasm. It carries out the reaction N-acetyl-L-glutamate 5-semialdehyde + phosphate + NADP(+) = N-acetyl-L-glutamyl 5-phosphate + NADPH + H(+). It participates in amino-acid biosynthesis; L-arginine biosynthesis; N(2)-acetyl-L-ornithine from L-glutamate: step 3/4. Its function is as follows. Catalyzes the NADPH-dependent reduction of N-acetyl-5-glutamyl phosphate to yield N-acetyl-L-glutamate 5-semialdehyde. The sequence is that of N-acetyl-gamma-glutamyl-phosphate reductase from Lachnoclostridium phytofermentans (strain ATCC 700394 / DSM 18823 / ISDg) (Clostridium phytofermentans).